Consider the following 341-residue polypeptide: MKALSKLKAEEGIWMTDVPEPELGHNDLLIKIRKTAICGTDVHIYNWDEWSQKTIPVPMVVGHEYVGEVVGIGQEVKGFKIGDRVSGEGHITCGHCRNCRAGRTHLCRNTIGVGVNRPGCFAEYLVIPAFNAFKIPDNISDDLASIFDPFGNAVHTALSFDLVGEDVLVSGAGPIGIMAAAVAKHVGARNVVITDVNEYRLELARKMGITRAVNVAKENLEDVMAELGMTEGFDVGLEMSGAPAAFRTMLDTMNHGGRIAMLGIPPSDMSIDWTKVIFKGLFIKGIYGREMFETWYKMAALIQSGLDLSPIITHRFSIDDFQKGFDAMRSGQSGKVILSWD.

Position 38 (Cys-38) interacts with Zn(2+). Catalysis depends on charge relay system residues Thr-40 and His-43. 6 residues coordinate Zn(2+): His-63, Glu-64, Cys-93, Cys-96, Cys-99, and Cys-107. Residues Ile-175, Asp-195, Arg-200, 262–264, and 286–287 each bind NAD(+); these read LGI and IY.

The protein belongs to the zinc-containing alcohol dehydrogenase family. In terms of assembly, homotetramer. Requires Zn(2+) as cofactor.

The protein resides in the cytoplasm. It carries out the reaction L-threonine + NAD(+) = (2S)-2-amino-3-oxobutanoate + NADH + H(+). Its pathway is amino-acid degradation; L-threonine degradation via oxydo-reductase pathway; glycine from L-threonine: step 1/2. Its function is as follows. Catalyzes the NAD(+)-dependent oxidation of L-threonine to 2-amino-3-ketobutyrate. The polypeptide is L-threonine 3-dehydrogenase (Escherichia fergusonii (strain ATCC 35469 / DSM 13698 / CCUG 18766 / IAM 14443 / JCM 21226 / LMG 7866 / NBRC 102419 / NCTC 12128 / CDC 0568-73)).